The following is a 579-amino-acid chain: Thiol:disulfide interchange protein DsbD (579 aa).

Residues 1–16 (MKKLFLFFTLIFTAFA) form the signal peptide. 2 disulfides stabilise this stretch: Cys-124-Cys-129 and Cys-193-Cys-315. A run of 8 helical transmembrane segments spans residues 178–198 (IFGF…LPML), 230–250 (LTYT…QIAL), 254–274 (YVMI…FGLF), 296–316 (GAFG…SPCT), 337–357 (AATL…ITLF), 376–396 (FGFV…PEVW), 397–417 (EPRL…LQMS), and 420–440 (GFGY…VQPL). In terms of domain architecture, Thioredoxin spans 449 to 579 (TTTQSAVENM…AFSNWLKALH (131 aa)). A disulfide bridge links Cys-495 with Cys-498.

This sequence belongs to the thioredoxin family. DsbD subfamily.

It is found in the cell inner membrane. The catalysed reaction is [protein]-dithiol + NAD(+) = [protein]-disulfide + NADH + H(+). It catalyses the reaction [protein]-dithiol + NADP(+) = [protein]-disulfide + NADPH + H(+). Its function is as follows. Required to facilitate the formation of correct disulfide bonds in some periplasmic proteins and for the assembly of the periplasmic c-type cytochromes. Acts by transferring electrons from cytoplasmic thioredoxin to the periplasm. This transfer involves a cascade of disulfide bond formation and reduction steps. This chain is Thiol:disulfide interchange protein DsbD, found in Haemophilus influenzae (strain 86-028NP).